A 757-amino-acid chain; its full sequence is MTSTTAARTASSRVGATTLLTIVVLALAWFVGFASRLFAIVRFESIIHEFDPWFNYRATHHMVQHGFYKFLNWFDERAWYPLGRIVGGTVYPGLMVTSGLIHWILDSLNFHVHIREVCVFLAPTFSGLTAIATYLLTKELWSPGAGLFAACFIAISPGYTSRSVAGSYDNEGIAIFALQFTYYLWVKSLKTGSIMWASLCALSYFYMVSAWGGYVFIINLIPLHALALIIMGRYSSRLFVSYTSFYCLATILSMQVPFVGFQPVRTSEHMPAFGVFGLLQIVALMHYARNRITRQQFMTLFVGGLTILGALSVVVYFALVWGGYVAPFSGRFYSLWDTGYAKIHIPIIASVSEHQPTTWVSFFFDLHITAAVFPVGLWYCIKKVNDERVFIILYAVSAVYFAGVMVRLMLTLTPAVCVLAGIGFSYTFEKYLKDEETKERSSSQSGTTKDEKLYDKAAKNVKSRNANDGDESGVSSNVRTIISIILVIFLLMFVVHATYVTSNAYSHPSVVLQSSTNNGDRIIMDDFREAYHWLRENTADDARVMSWWDYGYQIAGMANRTTLVDNNTWNNSHIALVGKAMSSNESAAYEIMTELDVDYILVIFGGVIGYSGDDINKFLWMVRIAQGEHPKDIREENYFTSTGEYSTGAGASETMLNCLMYKMSYYRFGETRVGYNQAGGFDRTRGYVIGKKDITLEYIEEAYTTENWLVRIYKRKKLPNRPTVKSEEATIPIKGKKATQGKNKKGVIRPAPTASKA.

Over 1 to 13 (MTSTTAARTASSR) the chain is Cytoplasmic. A helical membrane pass occupies residues 14–34 (VGATTLLTIVVLALAWFVGFA). Residues 35–121 (SRLFAIVRFE…VHIREVCVFL (87 aa)) are Lumenal-facing. A DXD motif 1 motif is present at residues 49-51 (EFD). Asp-51 is a binding site for Mn(2+). Residues 122–140 (APTFSGLTAIATYLLTKEL) form a helical membrane-spanning segment. Over 141–142 (WS) the chain is Cytoplasmic. A helical transmembrane segment spans residues 143–160 (PGAGLFAACFIAISPGYT). The Lumenal portion of the chain corresponds to 161–171 (SRSVAGSYDNE). Mn(2+)-binding residues include Asp-169 and Glu-171. The DXD motif 2 motif lies at 169–171 (DNE). Residues 172 to 191 (GIAIFALQFTYYLWVKSLKT) form a helical membrane-spanning segment. Over 192–193 (GS) the chain is Cytoplasmic. The chain crosses the membrane as a helical span at residues 194–208 (IMWASLCALSYFYMV). The Lumenal segment spans residues 209–210 (SA). 2 consecutive transmembrane segments (helical) span residues 211 to 235 (WGGYVFIINLIPLHALALIIMGRYS) and 236 to 261 (SRLFVSYTSFYCLATILSMQVPFVGF). Residues 262-269 (QPVRTSEH) are Lumenal-facing. A helical membrane pass occupies residues 270-289 (MPAFGVFGLLQIVALMHYAR). Residues 290 to 299 (NRITRQQFMT) lie on the Cytoplasmic side of the membrane. A helical membrane pass occupies residues 300 to 320 (LFVGGLTILGALSVVVYFALV). The Lumenal segment spans residues 321–358 (WGGYVAPFSGRFYSLWDTGYAKIHIPIIASVSEHQPTT). Residues 350 to 353 (SVSE) carry the SVSE motif motif. A helical transmembrane segment spans residues 359–381 (WVSFFFDLHITAAVFPVGLWYCI). The Cytoplasmic portion of the chain corresponds to 382 to 387 (KKVNDE). Residues 388–404 (RVFIILYAVSAVYFAGV) form a helical membrane-spanning segment. Topologically, residues 405-408 (MVRL) are lumenal. Residue Arg-407 coordinates dolichyl diphosphooligosaccharide. The helical transmembrane segment at 409 to 430 (MLTLTPAVCVLAGIGFSYTFEK) threads the bilayer. At 431 to 469 (YLKDEETKERSSSQSGTTKDEKLYDKAAKNVKSRNANDG) the chain is on the cytoplasmic side. The helical transmembrane segment at 470–495 (DESGVSSNVRTIISIILVIFLLMFVV) threads the bilayer. At 496–757 (HATYVTSNAY…IRPAPTASKA (262 aa)) the chain is on the lumenal side. Positions 547 to 549 (WWD) are interacts with target acceptor peptide in protein substrate. Positions 547 to 551 (WWDYG) match the WWDYG motif motif. Tyr-552 contacts dolichyl diphosphooligosaccharide. Residues Asn-559 and Asn-566 are each glycosylated (N-linked (GlcNAc...) asparagine). Residue Asn-570 is glycosylated (N-linked (GlcNAc...) (high mannose) asparagine). An N-linked (GlcNAc...) asparagine glycan is attached at Asn-584. The DK motif motif lies at 614 to 621 (DINKFLWM). Positions 721–757 (RPTVKSEEATIPIKGKKATQGKNKKGVIRPAPTASKA) are disordered. Basic residues predominate over residues 734-747 (KGKKATQGKNKKGV).

It belongs to the STT3 family. Component of the oligosaccharyltransferase (OST) complex. Requires Mg(2+) as cofactor. It depends on Mn(2+) as a cofactor.

The protein resides in the endoplasmic reticulum membrane. It catalyses the reaction a di-trans,poly-cis-dolichyl diphosphooligosaccharide + L-asparaginyl-[protein] = N(4)-(oligosaccharide-(1-&gt;4)-N-acetyl-beta-D-glucosaminyl-(1-&gt;4)-N-acetyl-beta-D-glucosaminyl)-L-asparaginyl-[protein] + a di-trans,poly-cis-dolichyl diphosphate + H(+). Its pathway is protein modification; protein glycosylation. Catalytic subunit of the oligosaccharyl transferase (OST) complex that catalyzes the initial transfer of a defined glycan (Glc(3)Man(9)GlcNAc(2) in eukaryotes) from the lipid carrier dolichol-pyrophosphate to an asparagine residue within an Asn-X-Ser/Thr consensus motif in nascent polypeptide chains, the first step in protein N-glycosylation. N-glycosylation occurs cotranslationally and the complex associates with the Sec61 complex at the channel-forming translocon complex that mediates protein translocation across the endoplasmic reticulum (ER). All subunits are required for a maximal enzyme activity. This subunit contains the active site and the acceptor peptide and donor lipid-linked oligosaccharide (LLO) binding pockets. This is Dolichyl-diphosphooligosaccharide--protein glycosyltransferase subunit stt-3 from Caenorhabditis elegans.